Consider the following 731-residue polypeptide: Probable G-protein coupled receptor 149 (731 aa).

Over 1–35 (MSLFLSNLSTNDSSLWKENHNSTDLLNPPGTLNIY) the chain is Extracellular. N-linked (GlcNAc...) asparagine glycans are attached at residues Asn-7, Asn-11, and Asn-21. A helical membrane pass occupies residues 36–56 (LFCLTCLMTFAALVGSIYSLI). Over 57 to 69 (SLLKMQNRTVVSM) the chain is Cytoplasmic. A helical membrane pass occupies residues 70-90 (LVASWSVDDLMSVLSVTIFMF). Residues 91–109 (LQWPNEVPGYFQFLCTTSA) are Extracellular-facing. A disulfide bridge links Cys-105 with Cys-182. The chain crosses the membrane as a helical span at residues 110–132 (LMYLCQGLSSNLKATLLVSYNFY). The Cytoplasmic segment spans residues 133–155 (TMHRGVGSQTASRRSGQVLGVVL). A helical transmembrane segment spans residues 156 to 176 (TVWAASLLLSALPLCGWGAFV). The Extracellular segment spans residues 177-189 (RTPWGCLVDCSSS). Residues 190 to 210 (YVLFLSIVYALAFGLLVGLSV) traverse the membrane as a helical segment. Over 211-310 (PLTHRLLCSE…SFTVSVAQKR (100 aa)) the chain is Cytoplasmic. Positions 234 to 271 (RGASIPGTPPTAGRVVSLSPEDAPGPSLRRSGGCSPSS) are disordered. A helical membrane pass occupies residues 311–331 (FALILALTKVVLWLPMMMHMV). At 332–342 (VQNVVGFQSLP) the chain is on the extracellular side. The chain crosses the membrane as a helical span at residues 343-363 (LETFSFLLTLLATTVTPVFVL). At 364 to 731 (SKRWTHLPCG…RKREEESKGS (368 aa)) the chain is on the cytoplasmic side. Residues 475-526 (NTDITEAKQDSNNKKDAFSDKTGGDINYEETTFSEGPERRLSHEESQKPDLS) form a disordered region. 2 stretches are compositionally biased toward basic and acidic residues: residues 479 to 497 (TEAK…DKTG) and 510 to 526 (GPER…PDLS).

This sequence belongs to the G-protein coupled receptor 1 family.

It localises to the cell membrane. Its function is as follows. Orphan receptor. The chain is Probable G-protein coupled receptor 149 (GPR149) from Homo sapiens (Human).